Here is a 323-residue protein sequence, read N- to C-terminus: Cyclin-H (323 aa).

The residue at position 5 (serine 5) is a Phosphoserine; by CDK8. Serine 132 is modified (phosphoserine). The tract at residues 297 to 323 (YEDDDYVSKKSKHEEEEWTDDDLVESL) is disordered. The segment covering 302-311 (YVSKKSKHEE) has biased composition (basic and acidic residues). Serine 304 carries the post-translational modification Phosphoserine; by CDK8. A compositionally biased stretch (acidic residues) spans 312 to 323 (EEWTDDDLVESL). Threonine 315 bears the Phosphothreonine mark. Phosphoserine is present on serine 322.

It belongs to the cyclin family. Cyclin C subfamily. Associates primarily with CDK7 and MAT1 to form the CAK complex. CAK can further associate with the core-TFIIH to form the TFIIH basal transcription factor.

It is found in the nucleus. Its function is as follows. Regulates CDK7, the catalytic subunit of the CDK-activating kinase (CAK) enzymatic complex. CAK activates the cyclin-associated kinases CDK1, CDK2, CDK4 and CDK6 by threonine phosphorylation. CAK complexed to the core-TFIIH basal transcription factor activates RNA polymerase II by serine phosphorylation of the repetitive C-terminal domain (CTD) of its large subunit (POLR2A), allowing its escape from the promoter and elongation of the transcripts. Involved in cell cycle control and in RNA transcription by RNA polymerase II. Its expression and activity are constant throughout the cell cycle. The polypeptide is Cyclin-H (CCNH) (Homo sapiens (Human)).